The following is a 159-amino-acid chain: MQGDPDVLRLLNEQLTSELTAINQYFLHSKMQDNWGFTELAAHTRAESFDEMRHAEEITDRILLLDGLPNYQRIGSLRIGQTLREQFEADLAIEYDVLNRLKPGIVMCREKQDTTSAVLLEKIVADEEEHIDYLETQLELMDKLGEELYSAQCVSRPPT.

One can recognise a Ferritin-like diiron domain in the interval 1–145 (MQGDPDVLRL…TQLELMDKLG (145 aa)). Fe cation-binding residues include Glu-18 and Glu-51. Position 52 (Met-52) interacts with heme b. Fe cation is bound by residues His-54, Glu-94, Glu-127, and His-130.

It belongs to the bacterioferritin family. Homooligomer of 24 subunits, arranged as 12 dimers, that are packed together to form an approximately spherical molecule with a central cavity, in which large amounts of iron can be deposited. Heme b is required as a cofactor.

The enzyme catalyses 4 Fe(2+) + O2 + 4 H(+) = 4 Fe(3+) + 2 H2O. The catalysed reaction is Fe(2+)(in) = Fe(2+)(out). Its function is as follows. Iron-storage protein, whose ferroxidase center binds Fe(2+), oxidizes it using dioxygen to Fe(3+), and participates in the subsequent Fe(3+) oxide mineral core formation within the central cavity of the BFR protein shell. This is Bacterioferritin (bfr) from Mycobacterium bovis (strain ATCC BAA-935 / AF2122/97).